Here is a 476-residue protein sequence, read N- to C-terminus: Oogenesin-2 (476 aa).

The stretch at 97-121 is one LRR 1; degenerate repeat; the sequence is RCKLREITLSHDLVVVWAGSHEVEG. Residues 176 to 200 form an LRR 2; degenerate repeat; sequence HLHCRKLKIYGLTKAAVIEMFKIVH. The LRR 3; degenerate repeat unit spans residues 201–226; that stretch reads AEYIEDLELSCLCLEYLDFLNPYLKQ. Residues 227–264 form an LRR 4; degenerate repeat; that stretch reads MSNLLSLTLDEIIYTLNIDDYRNLNEEKVITVISHLPT. LRR repeat units follow at residues 265–285, 286–317, 342–369, and 370–394; these read FHHL…LRCL, KKPL…FELR, RHTL…ALSQ, and CYQL…LLHH.

Belongs to the PRAME family. Expressed in ovary, specifically in oocytes. Detected in follicles with two layers of granulosa cells, and are present in early as well as large antral follicles.

The protein is Oogenesin-2 of Mus musculus (Mouse).